We begin with the raw amino-acid sequence, 917 residues long: Translation initiation factor IF-2 (917 aa).

The segment at 1-312 (MEEQKSIKET…KGGREENENT (312 aa)) is disordered. Positions 20–30 (TKKKLVIKKKA) are enriched in basic residues. Positions 41–59 (PGAQGQTTATEAKQSSPAS) are enriched in polar residues. Composition is skewed to basic and acidic residues over residues 60–76 (SDKK…EAKR) and 95–118 (RPDR…RKPE). 3 stretches are compositionally biased toward gly residues: residues 132–141 (SGGGQGGGNQ), 167–256 (QTGG…GYQG), and 281–293 (APGG…GPGG). Residues 297-312 (RVFDKEKGGREENENT) show a composition bias toward basic and acidic residues. One can recognise a tr-type G domain in the interval 414–587 (TRPPVVTIMG…ELLDHKANPK (174 aa)). The interval 423–430 (GHVDHGKT) is G1. 423 to 430 (GHVDHGKT) contributes to the GTP binding site. The interval 448-452 (GITQH) is G2. Residues 469–472 (DTPG) form a G3 region. GTP contacts are provided by residues 469–473 (DTPGH) and 523–526 (NKID). The tract at residues 523-526 (NKID) is G4. A G5 region spans residues 559–561 (SAK).

The protein belongs to the TRAFAC class translation factor GTPase superfamily. Classic translation factor GTPase family. IF-2 subfamily.

Its subcellular location is the cytoplasm. In terms of biological role, one of the essential components for the initiation of protein synthesis. Protects formylmethionyl-tRNA from spontaneous hydrolysis and promotes its binding to the 30S ribosomal subunits. Also involved in the hydrolysis of GTP during the formation of the 70S ribosomal complex. The protein is Translation initiation factor IF-2 of Leptospira biflexa serovar Patoc (strain Patoc 1 / ATCC 23582 / Paris).